The chain runs to 334 residues: Biotin synthase (334 aa).

Residues 55–280 enclose the Radical SAM core domain; that stretch reads EEIEVEGIIS…HTMLRFAGGR (226 aa). [4Fe-4S] cluster is bound by residues Cys-70, Cys-74, and Cys-77. [2Fe-2S] cluster is bound by residues Cys-113, Cys-205, and Arg-275.

It belongs to the radical SAM superfamily. Biotin synthase family. Homodimer. The cofactor is [4Fe-4S] cluster. Requires [2Fe-2S] cluster as cofactor.

The catalysed reaction is (4R,5S)-dethiobiotin + (sulfur carrier)-SH + 2 reduced [2Fe-2S]-[ferredoxin] + 2 S-adenosyl-L-methionine = (sulfur carrier)-H + biotin + 2 5'-deoxyadenosine + 2 L-methionine + 2 oxidized [2Fe-2S]-[ferredoxin]. It functions in the pathway cofactor biosynthesis; biotin biosynthesis; biotin from 7,8-diaminononanoate: step 2/2. In terms of biological role, catalyzes the conversion of dethiobiotin (DTB) to biotin by the insertion of a sulfur atom into dethiobiotin via a radical-based mechanism. The protein is Biotin synthase of Corynebacterium glutamicum (strain R).